We begin with the raw amino-acid sequence, 167 residues long: uncharacterized protein (167 aa).

Positions 28–59 (LTGIREELKADIDETRLIAESVLEEKEKKVVE) form a coiled coil.

This is an uncharacterized protein from Aquifex aeolicus (strain VF5).